A 493-amino-acid chain; its full sequence is Tripartite motif-containing protein 5 (493 aa).

Position 2 is an N-acetylalanine (Ala2). The RING-type zinc-finger motif lies at 15–59 (CPICLELLTQPLSLDCGHSFCQACLTANHKKSMLDKGESSCPVCR). Ser86 is subject to Phosphoserine. A B box-type zinc finger spans residues 90-132 (QKVDHCAHHGEKLLLFCQEDGKVICWLCERSQEHRGHHTFLTE). Positions 95, 98, 117, and 123 each coordinate Zn(2+). A coiled-coil region spans residues 131-240 (TEEVAREYQV…LISDLERRLQ (110 aa)). The segment at 185–198 (FEQLRDILDWEESN) is required for interaction with GABARAP and for autophagy. In terms of domain architecture, B30.2/SPRY spans 281–493 (LKGMLEVFRE…VPMTLCSPSS (213 aa)).

The protein belongs to the TRIM/RBCC family. Can form homodimers and homotrimers. In addition to lower-order dimerization, also exhibits a higher-order multimerization and both low- and high-order multimerizations are essential for its restriction activity. Interacts with BTBD1 and BTBD2. Interacts with PSMC4, PSMC5, PSMD7 and HSPA8/HSC70. Interacts (via B30.2/SPRY domain) with HSPA1A/B. Interacts with PSMC2, MAP3K7/TAK1, TAB2 and TAB3. Interacts with SQSTM1. Interacts with TRIM6 and TRIM34. Interacts with ULK1 (phosphorylated form), GABARAP, GABARAPL1, GABARAPL2, MAP1LC3A, MAP1LC3C and BECN1. Post-translationally, degraded in a proteasome-independent fashion in the absence of viral infection but in a proteasome-dependent fashion following exposure to restriction sensitive virus. Autoubiquitinated in a RING finger- and UBE2D2-dependent manner. Monoubiquitinated by TRIM21. Deubiquitinated by Yersinia YopJ. Ubiquitination may not lead to proteasomal degradation.

Its subcellular location is the cytoplasm. The protein resides in the nucleus. It carries out the reaction S-ubiquitinyl-[E2 ubiquitin-conjugating enzyme]-L-cysteine + [acceptor protein]-L-lysine = [E2 ubiquitin-conjugating enzyme]-L-cysteine + N(6)-ubiquitinyl-[acceptor protein]-L-lysine.. It functions in the pathway protein modification; protein ubiquitination. In terms of biological role, capsid-specific restriction factor that prevents infection from non-host-adapted retroviruses. Blocks viral replication early in the life cycle, after viral entry but before reverse transcription. In addition to acting as a capsid-specific restriction factor, also acts as a pattern recognition receptor that activates innate immune signaling in response to the retroviral capsid lattice. Binding to the viral capsid triggers its E3 ubiquitin ligase activity, and in concert with the heterodimeric ubiquitin conjugating enzyme complex UBE2V1-UBE2N (also known as UBC13-UEV1A complex) generates 'Lys-63'-linked polyubiquitin chains, which in turn are catalysts in the autophosphorylation of the MAP3K7/TAK1 complex (includes TAK1, TAB2, and TAB3). Activation of the MAP3K7/TAK1 complex by autophosphorylation results in the induction and expression of NF-kappa-B and MAPK-responsive inflammatory genes, thereby leading to an innate immune response in the infected cell. Plays a role in regulating autophagy through activation of autophagy regulator BECN1 by causing its dissociation from its inhibitors BCL2 and TAB2. This is Tripartite motif-containing protein 5 (TRIM5) from Pan troglodytes (Chimpanzee).